We begin with the raw amino-acid sequence, 216 residues long: MSWKKFITQQESMEYYNALQAFLKSQKELGKNIYPPEHLVFNAFNLTPLENIKVVILGQDPYHREGQSHGLSFSVPEGIKIPPSLRNIYKELSTSIEGYKIPESGNLAHWAKQGILLLNSVLTVEQADPGCHAKKGWETFTDNAISEINNARSGVIFLLWGSYAHKKGSLIDKNKHTVLTSTHPSPLSAYRGFLGCKHFSQVNDILAERREQLIIW.

Catalysis depends on D60, which acts as the Proton acceptor.

This sequence belongs to the uracil-DNA glycosylase (UDG) superfamily. UNG family.

It localises to the cytoplasm. The catalysed reaction is Hydrolyzes single-stranded DNA or mismatched double-stranded DNA and polynucleotides, releasing free uracil.. Functionally, excises uracil residues from the DNA which can arise as a result of misincorporation of dUMP residues by DNA polymerase or due to deamination of cytosine. This is Uracil-DNA glycosylase from Psychromonas ingrahamii (strain DSM 17664 / CCUG 51855 / 37).